A 185-amino-acid chain; its full sequence is Ribosome-recycling factor (185 aa).

It belongs to the RRF family.

It is found in the cytoplasm. Functionally, responsible for the release of ribosomes from messenger RNA at the termination of protein biosynthesis. May increase the efficiency of translation by recycling ribosomes from one round of translation to another. The polypeptide is Ribosome-recycling factor (Mycobacteroides abscessus (strain ATCC 19977 / DSM 44196 / CCUG 20993 / CIP 104536 / JCM 13569 / NCTC 13031 / TMC 1543 / L948) (Mycobacterium abscessus)).